The chain runs to 429 residues: Enolase (429 aa).

Gln-162 contacts (2R)-2-phosphoglycerate. Catalysis depends on Glu-204, which acts as the Proton donor. Mg(2+) is bound by residues Asp-241, Glu-286, and Asp-313. 4 residues coordinate (2R)-2-phosphoglycerate: Lys-338, Arg-367, Ser-368, and Lys-389. Lys-338 (proton acceptor) is an active-site residue.

This sequence belongs to the enolase family. Mg(2+) serves as cofactor.

It localises to the cytoplasm. The protein resides in the secreted. Its subcellular location is the cell surface. The enzyme catalyses (2R)-2-phosphoglycerate = phosphoenolpyruvate + H2O. Its pathway is carbohydrate degradation; glycolysis; pyruvate from D-glyceraldehyde 3-phosphate: step 4/5. Functionally, catalyzes the reversible conversion of 2-phosphoglycerate (2-PG) into phosphoenolpyruvate (PEP). It is essential for the degradation of carbohydrates via glycolysis. This chain is Enolase, found in Shouchella clausii (strain KSM-K16) (Alkalihalobacillus clausii).